The chain runs to 257 residues: Ubiquinone biosynthesis O-methyltransferase (257 aa).

S-adenosyl-L-methionine is bound by residues Arg-43, Gly-77, Asp-98, and Met-144.

The protein belongs to the methyltransferase superfamily. UbiG/COQ3 family.

It carries out the reaction a 3-demethylubiquinol + S-adenosyl-L-methionine = a ubiquinol + S-adenosyl-L-homocysteine + H(+). It catalyses the reaction a 3-(all-trans-polyprenyl)benzene-1,2-diol + S-adenosyl-L-methionine = a 2-methoxy-6-(all-trans-polyprenyl)phenol + S-adenosyl-L-homocysteine + H(+). It participates in cofactor biosynthesis; ubiquinone biosynthesis. Its function is as follows. O-methyltransferase that catalyzes the 2 O-methylation steps in the ubiquinone biosynthetic pathway. The protein is Ubiquinone biosynthesis O-methyltransferase of Psychrobacter arcticus (strain DSM 17307 / VKM B-2377 / 273-4).